The primary structure comprises 91 residues: Defensin-like protein 95 (91 aa).

The first 27 residues, 1–27 (MGSLKLSTFAIVVCLSILLISPIEVNG), serve as a signal peptide directing secretion. 4 disulfide bridges follow: cysteine 31–cysteine 76, cysteine 38–cysteine 63, cysteine 47–cysteine 73, and cysteine 51–cysteine 75.

This sequence belongs to the DEFL family.

It localises to the secreted. The sequence is that of Defensin-like protein 95 from Arabidopsis thaliana (Mouse-ear cress).